A 156-amino-acid polypeptide reads, in one-letter code: MKLYILAVGHKMPGWIASGFDEYTKRMPPELRIELREIKPELRSGGRSAESVMAAERQKIEAALPKGARIVALDERGRDWTTMQLAQALPGWQQDGRDVAFVIGGADGLDPELKARADLLLRISSMTLPHGMVRVLLAEQLYRAWSITQNHPYHRA.

S-adenosyl-L-methionine-binding positions include leucine 73, glycine 104, and 123–128 (ISSMTL).

It belongs to the RNA methyltransferase RlmH family. As to quaternary structure, homodimer.

It is found in the cytoplasm. The catalysed reaction is pseudouridine(1915) in 23S rRNA + S-adenosyl-L-methionine = N(3)-methylpseudouridine(1915) in 23S rRNA + S-adenosyl-L-homocysteine + H(+). Its function is as follows. Specifically methylates the pseudouridine at position 1915 (m3Psi1915) in 23S rRNA. The polypeptide is Ribosomal RNA large subunit methyltransferase H (Burkholderia vietnamiensis (strain G4 / LMG 22486) (Burkholderia cepacia (strain R1808))).